The chain runs to 574 residues: Sulfite reductase [NADPH] hemoprotein beta-component (574 aa).

Positions 439, 445, 484, and 488 each coordinate [4Fe-4S] cluster. Cys488 serves as a coordination point for siroheme.

It belongs to the nitrite and sulfite reductase 4Fe-4S domain family. In terms of assembly, alpha(8)-beta(8). The alpha component is a flavoprotein, the beta component is a hemoprotein. It depends on siroheme as a cofactor. Requires [4Fe-4S] cluster as cofactor.

It catalyses the reaction hydrogen sulfide + 3 NADP(+) + 3 H2O = sulfite + 3 NADPH + 4 H(+). It functions in the pathway sulfur metabolism; hydrogen sulfide biosynthesis; hydrogen sulfide from sulfite (NADPH route): step 1/1. Functionally, component of the sulfite reductase complex that catalyzes the 6-electron reduction of sulfite to sulfide. This is one of several activities required for the biosynthesis of L-cysteine from sulfate. This chain is Sulfite reductase [NADPH] hemoprotein beta-component, found in Paenibacillus sp. (strain JDR-2).